A 56-amino-acid chain; its full sequence is Large ribosomal subunit protein bL32 (56 aa).

The segment at 1–38 (MAVQQNKKSRSKRGMRRSHDSLSTAQLSVDATSGELHR) is disordered. The segment covering 7-16 (KKSRSKRGMR) has biased composition (basic residues). Residues 21 to 31 (SLSTAQLSVDA) are compositionally biased toward polar residues.

It belongs to the bacterial ribosomal protein bL32 family.

The chain is Large ribosomal subunit protein bL32 from Shewanella woodyi (strain ATCC 51908 / MS32).